The primary structure comprises 294 residues: Acetylglutamate kinase (294 aa).

Residues 69–70, Arg91, and Asn190 contribute to the substrate site; that span reads GG.

This sequence belongs to the acetylglutamate kinase family. ArgB subfamily.

Its subcellular location is the cytoplasm. The enzyme catalyses N-acetyl-L-glutamate + ATP = N-acetyl-L-glutamyl 5-phosphate + ADP. Its pathway is amino-acid biosynthesis; L-arginine biosynthesis; N(2)-acetyl-L-ornithine from L-glutamate: step 2/4. Functionally, catalyzes the ATP-dependent phosphorylation of N-acetyl-L-glutamate. In Mycobacterium bovis (strain ATCC BAA-935 / AF2122/97), this protein is Acetylglutamate kinase.